The chain runs to 90 residues: MNITDVRIRKISAEGKMKAIVSVTFENQFVVHDIKVIEGQNGLFIAMPSRKTPDGEFKDIAHPIDTQTREQIQKAILDEYEKVKNLDMQE.

It belongs to the SpoVG family.

Its function is as follows. Could be involved in septation. The polypeptide is Putative septation protein SpoVG (Clostridium perfringens (strain SM101 / Type A)).